The following is a 491-amino-acid chain: E3 ubiquitin-protein ligase Hakai (491 aa).

Disordered stretches follow at residues 1 to 20 and 33 to 61; these read MDHTDNELQGTNSSGSLGGL and KQASKVKPAPRTQRTVSRMPAKAPQGDEE. The RING-type zinc-finger motif lies at 109–149; it reads CDKCGLPIKVYGRMIPCKHVFCYDCAILHEKKGDKMCPGCS. An HYB domain region spans residues 148–206; it reads CSDPVQRIEQCTRGSLFMCSIVQGCKRTYLSQRDLQAHINHRHMRAGKPVTRASLENVH. A C2H2-type zinc finger spans residues 164–190; the sequence is FMCSIVQGCKRTYLSQRDLQAHINHRH. Residues Ser-201, Ser-285, and Ser-290 each carry the phosphoserine modification. The disordered stretch occupies residues 255-491; the sequence is QPHEDIRAPP…DQTRYRPYYQ (237 aa). 3 stretches are compositionally biased toward pro residues: residues 342-359, 372-389, and 399-423; these read APPPPPPPPISHPMPHPP, APPPPMTSAPPPITPPPG, and MNHPPPGPPPPQHGGPPVTAPPPHH. A compositionally biased stretch (polar residues) spans 427–442; the sequence is NSLPQFTEDQGTLSPP. Over residues 457-478 the composition is skewed to pro residues; that stretch reads PRGPPPPPRMQGPPSQTPLPGP.

The protein belongs to the Hakai family. As to quaternary structure, homodimer. Interacts with tyrosine-phosphorylated SRC substrates. Component of the WMM complex, a N6-methyltransferase complex composed of a catalytic subcomplex, named MAC, and of an associated subcomplex, named MACOM. The MAC subcomplex is composed of METTL3 and METTL14. The MACOM subcomplex is composed of WTAP, ZC3H13, CBLL1/HAKAI, VIRMA, and, in some cases of RBM15 (RBM15 or RBM15B). Also a component of a MACOM-like complex, named WTAP complex, composed of WTAP, ZC3H13, CBLL1, VIRMA, RBM15, BCLAF1 and THRAP3. Post-translationally, phosphorylated on tyrosine residues. Detected in heart, brain, spleen, lung, liver, skeletal muscle, kidney and testis.

It is found in the nucleus speckle. The protein resides in the nucleus. Its subcellular location is the nucleoplasm. It localises to the cytoplasm. It carries out the reaction S-ubiquitinyl-[E2 ubiquitin-conjugating enzyme]-L-cysteine + [acceptor protein]-L-lysine = [E2 ubiquitin-conjugating enzyme]-L-cysteine + N(6)-ubiquitinyl-[acceptor protein]-L-lysine.. It functions in the pathway protein modification; protein ubiquitination. Its function is as follows. E3 ubiquitin-protein ligase that mediates ubiquitination of several tyrosine-phosphorylated Src substrates, including CDH1, CTTN and DOK1. Targets CDH1 for endocytosis and degradation. Associated component of the WMM complex, a complex that mediates N6-methyladenosine (m6A) methylation of RNAs, a modification that plays a role in the efficiency of mRNA splicing and RNA processing. Its function in the WMM complex is unknown. The polypeptide is E3 ubiquitin-protein ligase Hakai (Mus musculus (Mouse)).